An 812-amino-acid chain; its full sequence is MNPERSERIEIPVLPLRDVVVYPHMVIPLFVGREKSIRCLEAAMDHDKKIMLVAQKEASTDEPGVNDLFTVGTVASILQMLKLPDGTVKVLVEGLQRARISALSDNGEHFSAKAEYLESPTIDEREQEVLVRTAISQFEGYIKLNKKIPPEVLTSLNSIDDPARLADTIAAHMPLKLADKQSVLEMSDVNERLEYLMAMMESEIDLLQVEKRIRNRVKKQMEKSQREYYLNEQMKAIQKELGEMDDAPDENEALKRKIDAAKMPKEAKEKAEAELQKLKMMSPMSAEATVVRGYIDWMVQVPWNARSKVKKDLRQAQEILDTDHYGLERVKDRILEYLAVQSRVNKIKGPILCLVGPPGVGKTSLGQSIAKATGRKYVRMALGGVRDEAEIRGHRRTYIGSMPGKLIQKMAKVGVKNPLFLLDEIDKMSSDMRGDPASALLEVLDPEQNVAFSDHYLEVDYDLSDVMFVATSNSMNIPAPLLDRMEVIRLSGYTEDEKLNIAKRHLLPKQIERNALKKGELTVDDSAIIGIIRYYTREAGVRGLEREISKLCRKAVKQLLLDKSLKHIEINGDNLHDYLGVQRFDYGRADNENRVGQVTGLAWTEVGGDLLTIETACVPGKGKLTYTGSLGEVMQESIQAALTVVRARAEKLGINPDFYEKRDIHVHVPEGATPKDGPSAGIAMCTALVSCLTGNPVRADVAMTGEITLRGQVLPIGGLKEKLLAAHRGGIKTVLIPFENKRDLKENPDNAKADQDRHPVKNNEEEQTLSLQNYPSVFLFFFFFFFEAIEAFNRFTAAGLKIACPAAILSLN.

In terms of domain architecture, Lon N-terminal spans 11 to 204 (IPVLPLRDVV…YLMAMMESEI (194 aa)). Residue 356-363 (GPPGVGKT) coordinates ATP. The 182-residue stretch at 592 to 773 (ENRVGQVTGL…EEEQTLSLQN (182 aa)) folds into the Lon proteolytic domain. Catalysis depends on residues Ser679 and Lys722. Residues 745–764 (KENPDNAKADQDRHPVKNNE) are compositionally biased toward basic and acidic residues. Residues 745 to 766 (KENPDNAKADQDRHPVKNNEEE) form a disordered region.

It belongs to the peptidase S16 family. As to quaternary structure, homohexamer. Organized in a ring with a central cavity. ATP binding and hydrolysis do not affect the oligomeric state of the enzyme.

The protein localises to the cytoplasm. It carries out the reaction Hydrolysis of proteins in presence of ATP.. Contains an allosteric site (distinct from its active site), whose occupancy by an unfolded polypeptide leads to enzyme activation. ATP-dependent serine protease that mediates the selective degradation of mutant and abnormal proteins as well as certain short-lived regulatory proteins. Required for cellular homeostasis and for survival from DNA damage and developmental changes induced by stress. Degrades polypeptides processively to yield small peptide fragments that are 5 to 10 amino acids long. Binds to DNA in a double-stranded, site-specific manner. Endogenous substrates include the regulatory proteins RcsA and SulA, the transcriptional activator SoxS, and UmuD. Its overproduction specifically inhibits translation through at least two different pathways, one of them being the YoeB-YefM toxin-antitoxin system. The polypeptide is Lon protease (Shigella dysenteriae serotype 1 (strain Sd197)).